Here is a 363-residue protein sequence, read N- to C-terminus: tRNA(Met) cytidine acetate ligase (363 aa).

Residues 7-20 (IAEY…HKYL), Gly-96, Asn-152, and Arg-175 contribute to the ATP site.

Belongs to the TmcAL family.

The protein resides in the cytoplasm. It catalyses the reaction cytidine(34) in elongator tRNA(Met) + acetate + ATP = N(4)-acetylcytidine(34) in elongator tRNA(Met) + AMP + diphosphate. In terms of biological role, catalyzes the formation of N(4)-acetylcytidine (ac(4)C) at the wobble position of elongator tRNA(Met), using acetate and ATP as substrates. First activates an acetate ion to form acetyladenylate (Ac-AMP) and then transfers the acetyl group to tRNA to form ac(4)C34. In Streptococcus suis (strain 98HAH33), this protein is tRNA(Met) cytidine acetate ligase.